A 160-amino-acid chain; its full sequence is MRILGIDPGLARVGYGVIDVEPRKGKQEGSQRMIDCGIIRTDPGRSEGERMVEIARDLRQIIRIHQPELASVEKFFFYRSSNTIAVVQARGVLIMTLARFGLPIVEFPPMQIKQALTGHGHADKDEVLEAVMRELNLDTPPRPDDAADALAVALTGWFQH.

Residues aspartate 7, glutamate 73, and aspartate 145 contribute to the active site. Mg(2+) contacts are provided by aspartate 7, glutamate 73, and aspartate 145.

The protein belongs to the RuvC family. In terms of assembly, homodimer which binds Holliday junction (HJ) DNA. The HJ becomes 2-fold symmetrical on binding to RuvC with unstacked arms; it has a different conformation from HJ DNA in complex with RuvA. In the full resolvosome a probable DNA-RuvA(4)-RuvB(12)-RuvC(2) complex forms which resolves the HJ. Mg(2+) is required as a cofactor.

Its subcellular location is the cytoplasm. It catalyses the reaction Endonucleolytic cleavage at a junction such as a reciprocal single-stranded crossover between two homologous DNA duplexes (Holliday junction).. Functionally, the RuvA-RuvB-RuvC complex processes Holliday junction (HJ) DNA during genetic recombination and DNA repair. Endonuclease that resolves HJ intermediates. Cleaves cruciform DNA by making single-stranded nicks across the HJ at symmetrical positions within the homologous arms, yielding a 5'-phosphate and a 3'-hydroxyl group; requires a central core of homology in the junction. The consensus cleavage sequence is 5'-(A/T)TT(C/G)-3'. Cleavage occurs on the 3'-side of the TT dinucleotide at the point of strand exchange. HJ branch migration catalyzed by RuvA-RuvB allows RuvC to scan DNA until it finds its consensus sequence, where it cleaves and resolves the cruciform DNA. The sequence is that of Crossover junction endodeoxyribonuclease RuvC from Synechococcus sp. (strain CC9311).